Consider the following 334-residue polypeptide: Protein-methionine-sulfoxide reductase catalytic subunit MsrP (334 aa).

A signal peptide (tat-type signal) is located at residues 1–44 (MKKNQFLKESDITAESVFFMKRRQVLKALGISAAALSLPHAAHA). Mo-molybdopterin contacts are provided by residues Asn88, 91–92 (YE), Cys146, Thr181, Asn233, Arg238, and 249–251 (GIK).

It belongs to the MsrP family. Heterodimer of a catalytic subunit (MsrP) and a heme-binding subunit (MsrQ). Requires Mo-molybdopterin as cofactor. Predicted to be exported by the Tat system. The position of the signal peptide cleavage has not been experimentally proven.

Its subcellular location is the periplasm. It carries out the reaction L-methionyl-[protein] + a quinone + H2O = L-methionyl-(S)-S-oxide-[protein] + a quinol. The enzyme catalyses L-methionyl-[protein] + a quinone + H2O = L-methionyl-(R)-S-oxide-[protein] + a quinol. In terms of biological role, part of the MsrPQ system that repairs oxidized periplasmic proteins containing methionine sulfoxide residues (Met-O), using respiratory chain electrons. Thus protects these proteins from oxidative-stress damage caused by reactive species of oxygen and chlorine generated by the host defense mechanisms. MsrPQ is essential for the maintenance of envelope integrity under bleach stress, rescuing a wide series of structurally unrelated periplasmic proteins from methionine oxidation, including the primary periplasmic chaperone SurA and the lipoprotein Pal. The catalytic subunit MsrP is non-stereospecific, being able to reduce both (R-) and (S-) diastereoisomers of methionine sulfoxide. The polypeptide is Protein-methionine-sulfoxide reductase catalytic subunit MsrP (Shigella dysenteriae serotype 1 (strain Sd197)).